The primary structure comprises 644 residues: Protein cueball (644 aa).

The first 26 residues, 1–26, serve as a signal peptide directing secretion; the sequence is MIRIRFGMDVLLVLLLATCLLSPTHG. Topologically, residues 27–531 are extracellular; that stretch reads TPLEWDFAVT…VCLTPTVWTS (505 aa). Residues Asn-82 and Asn-108 are each glycosylated (N-linked (GlcNAc...) asparagine). LDL-receptor class B repeat units follow at residues 121–166, 167–211, and 212–257; these read TNLF…DVCR, RKLY…DQLS, and DRLF…TNDA. Asn-175 and Asn-190 each carry an N-linked (GlcNAc...) asparagine glycan. Asn-313 carries an N-linked (GlcNAc...) asparagine glycan. 2 consecutive EGF-like domains span residues 398–430 and 433–471; these read EIRE…FTGE and EVSV…ARCE. 5 cysteine pairs are disulfide-bonded: Cys-402–Cys-411, Cys-406–Cys-421, Cys-437–Cys-447, Cys-441–Cys-459, and Cys-461–Cys-470. N-linked (GlcNAc...) asparagine glycosylation is found at Asn-473 and Asn-508. The chain crosses the membrane as a helical span at residues 532 to 552; that stretch reads SVIIILVVGIVSSLLLVAVIV. The Cytoplasmic segment spans residues 553–644; that stretch reads HGIRRLYKPK…LIHNMEDDLY (92 aa).

The protein belongs to the cueball family.

It is found in the cell membrane. In terms of biological role, has a role in spermatogenesis and oogenesis. The sequence is that of Protein cueball from Drosophila yakuba (Fruit fly).